A 419-amino-acid chain; its full sequence is Tyrosine--tRNA ligase (419 aa).

An L-tyrosine-binding site is contributed by Tyr-34. Residues 39–48 carry the 'HIGH' region motif; sequence PTADSLHIGN. Tyr-169 and Gln-173 together coordinate L-tyrosine. The 'KMSKS' region motif lies at 230 to 234; sequence KFGKT. Lys-233 contacts ATP. Residues 352–419 enclose the S4 RNA-binding domain; that stretch reads VPLVELLVSA…KKKYYLIRYA (68 aa).

The protein belongs to the class-I aminoacyl-tRNA synthetase family. TyrS type 1 subfamily. In terms of assembly, homodimer.

The protein resides in the cytoplasm. It catalyses the reaction tRNA(Tyr) + L-tyrosine + ATP = L-tyrosyl-tRNA(Tyr) + AMP + diphosphate + H(+). Catalyzes the attachment of tyrosine to tRNA(Tyr) in a two-step reaction: tyrosine is first activated by ATP to form Tyr-AMP and then transferred to the acceptor end of tRNA(Tyr). This is Tyrosine--tRNA ligase from Bacillus caldotenax.